We begin with the raw amino-acid sequence, 236 residues long: Probable chemoreceptor glutamine deamidase CheD (236 aa).

Residues 1–20 form a disordered region; that stretch reads MIEFGKRATPQSAADAVRGD.

Belongs to the CheD family.

It catalyses the reaction L-glutaminyl-[protein] + H2O = L-glutamyl-[protein] + NH4(+). Functionally, probably deamidates glutamine residues to glutamate on methyl-accepting chemotaxis receptors (MCPs), playing an important role in chemotaxis. This is Probable chemoreceptor glutamine deamidase CheD from Ralstonia pickettii (strain 12J).